A 191-amino-acid chain; its full sequence is UPF0149 protein VV1_1551 (191 aa).

This sequence belongs to the UPF0149 family.

The polypeptide is UPF0149 protein VV1_1551 (Vibrio vulnificus (strain CMCP6)).